The sequence spans 266 residues: Putative expansin-A30 (266 aa).

A signal peptide spans 1–24 (MAAASSTTATTAILAAVIISLAGA). An Expansin-like EG45 domain is found at 55–170 (GGACGYGNLY…RRVPCARAGG (116 aa)). One can recognise an Expansin-like CBD domain in the interval 180–261 (YWLLAYVMNV…SWCFGLTYQA (82 aa)).

It belongs to the expansin family. Expansin A subfamily.

Its subcellular location is the secreted. The protein localises to the cell wall. It is found in the membrane. In terms of biological role, may cause loosening and extension of plant cell walls by disrupting non-covalent bonding between cellulose microfibrils and matrix glucans. No enzymatic activity has been found. May be required for rapid internodal elongation in deepwater rice during submergence. The polypeptide is Putative expansin-A30 (EXPA30) (Oryza sativa subsp. japonica (Rice)).